The primary structure comprises 379 residues: Cytochrome b (379 aa).

The next 4 helical transmembrane spans lie at 33–53 (FGSLLGMCLMIQILTGLFLAM), 77–98 (WLIRYLHANGASMFFICLFIHV), 113–133 (WNIGIILFLTTMATAFVGYVL), and 178–198 (FFAFHFILPFIITAFVLVHLL). Heme b contacts are provided by His-83 and His-97. Heme b contacts are provided by His-182 and His-196. His-201 contributes to the a ubiquinone binding site. The next 4 membrane-spanning stretches (helical) occupy residues 226-246 (IKDLLGILFLLTALMILALFF), 288-308 (LGGVLALLLSILILMAFPLLN), 320-340 (ITQTIYWILIANLLVLTWIGG), and 347-367 (FTMIGQIASITYFAIILILXP).

Belongs to the cytochrome b family. As to quaternary structure, the cytochrome bc1 complex contains 11 subunits: 3 respiratory subunits (MT-CYB, CYC1 and UQCRFS1), 2 core proteins (UQCRC1 and UQCRC2) and 6 low-molecular weight proteins (UQCRH/QCR6, UQCRB/QCR7, UQCRQ/QCR8, UQCR10/QCR9, UQCR11/QCR10 and a cleavage product of UQCRFS1). This cytochrome bc1 complex then forms a dimer. The cofactor is heme b.

The protein resides in the mitochondrion inner membrane. Functionally, component of the ubiquinol-cytochrome c reductase complex (complex III or cytochrome b-c1 complex) that is part of the mitochondrial respiratory chain. The b-c1 complex mediates electron transfer from ubiquinol to cytochrome c. Contributes to the generation of a proton gradient across the mitochondrial membrane that is then used for ATP synthesis. In Akodon toba (Chaco grass mouse), this protein is Cytochrome b (MT-CYB).